We begin with the raw amino-acid sequence, 590 residues long: Polypeptide N-acetylgalactosaminyltransferase 8 (590 aa).

The Cytoplasmic portion of the chain corresponds to 1–11; the sequence is MCLDIWRHKKK. Residues 12 to 31 traverse the membrane as a helical; Signal-anchor for type II membrane protein segment; the sequence is VLPLLLLMAIGSIIYYLYTL. Over 32 to 590 the chain is Lumenal; sequence KLEGERDESA…QHFWDNVKTQ (559 aa). A glycan (N-linked (GlcNAc...) asparagine) is linked at N77. Cystine bridges form between C117–C345, C336–C419, C459–C475, C502–C517, and C546–C561. Residues 127-236 form a catalytic subdomain A region; the sequence is LPSVSVVITY…KGWLEPLIAP (110 aa). Residue D168 participates in substrate binding. Position 220 (D220) interacts with Mn(2+). S221 contacts substrate. Position 222 (H222) interacts with Mn(2+). N241 carries an N-linked (GlcNAc...) asparagine glycan. Positions 291–353 are catalytic subdomain B; it reads PHKNPIMNGG…PCSRVGHLFR (63 aa). Residue W322 coordinates substrate. H350 serves as a coordination point for Mn(2+). R353 provides a ligand contact to substrate. The 128-residue stretch at 446 to 573 folds into the Ricin B-type lectin domain; it reads ASGVLQSISS…KNHKQQWKFG (128 aa).

This sequence belongs to the glycosyltransferase 2 family. GalNAc-T subfamily. The cofactor is Mn(2+). In terms of tissue distribution, expressed in developing oocytes and egg chambers. During embryonic stages 9-11, expressed in the primordium of the foregut, midgut and hindgut. During embryonic stages 12-13, expressed in the posterior midgut and hindgut. During embryonic stages 14-15, expression continues in the hindgut. No expression detected during embryonic stages 16-17 or in third instar larvae imaginal disks.

It is found in the golgi apparatus membrane. The enzyme catalyses L-seryl-[protein] + UDP-N-acetyl-alpha-D-galactosamine = a 3-O-[N-acetyl-alpha-D-galactosaminyl]-L-seryl-[protein] + UDP + H(+). It carries out the reaction L-threonyl-[protein] + UDP-N-acetyl-alpha-D-galactosamine = a 3-O-[N-acetyl-alpha-D-galactosaminyl]-L-threonyl-[protein] + UDP + H(+). It functions in the pathway protein modification; protein glycosylation. In terms of biological role, catalyzes the initial reaction in O-linked oligosaccharide biosynthesis, the transfer of an N-acetyl-D-galactosamine residue to a serine or threonine residue on the protein receptor. It can both act as a peptide transferase that transfers GalNAc onto unmodified peptide substrates, and as a glycopeptide transferase that requires the prior addition of a GalNAc on a peptide before adding additional GalNAc moieties. Prefers both EA2 and the diglycosylated Muc5AC-3/13 as substrates, albeit at very low levels fro Muc5AC-3/13. The sequence is that of Polypeptide N-acetylgalactosaminyltransferase 8 from Drosophila melanogaster (Fruit fly).